Here is a 123-residue protein sequence, read N- to C-terminus: Large ribosomal subunit protein uL14 (123 aa).

Belongs to the universal ribosomal protein uL14 family. Part of the 50S ribosomal subunit. Forms a cluster with proteins L3 and L19. In the 70S ribosome, L14 and L19 interact and together make contacts with the 16S rRNA in bridges B5 and B8.

Its function is as follows. Binds to 23S rRNA. Forms part of two intersubunit bridges in the 70S ribosome. The chain is Large ribosomal subunit protein uL14 from Blochmanniella floridana.